The following is a 266-amino-acid chain: 5'-nucleotidase SurE (266 aa).

Asp8, Asp9, Ser42, and Asn98 together coordinate a divalent metal cation.

Belongs to the SurE nucleotidase family. A divalent metal cation is required as a cofactor.

The protein localises to the cytoplasm. It carries out the reaction a ribonucleoside 5'-phosphate + H2O = a ribonucleoside + phosphate. Its function is as follows. Nucleotidase that shows phosphatase activity on nucleoside 5'-monophosphates. The sequence is that of 5'-nucleotidase SurE from Methanocaldococcus jannaschii (strain ATCC 43067 / DSM 2661 / JAL-1 / JCM 10045 / NBRC 100440) (Methanococcus jannaschii).